Consider the following 340-residue polypeptide: TD and POZ domain-containing protein 5 (340 aa).

Residues 19 to 149 (EFCYVWTIRN…ENKLTLCCKV (131 aa)) form the MATH domain. A BTB domain is found at 188-255 (TDCCLLVAGH…IYTGKAPHLQ (68 aa)).

It belongs to the Tdpoz family.

The chain is TD and POZ domain-containing protein 5 from Mus musculus (Mouse).